Consider the following 141-residue polypeptide: Nucleoside diphosphate kinase (141 aa).

Positions 11, 59, 87, 93, 104, and 114 each coordinate ATP. The active-site Pros-phosphohistidine intermediate is His117.

This sequence belongs to the NDK family. In terms of assembly, homotetramer. The cofactor is Mg(2+).

The protein resides in the cytoplasm. It carries out the reaction a 2'-deoxyribonucleoside 5'-diphosphate + ATP = a 2'-deoxyribonucleoside 5'-triphosphate + ADP. The catalysed reaction is a ribonucleoside 5'-diphosphate + ATP = a ribonucleoside 5'-triphosphate + ADP. Major role in the synthesis of nucleoside triphosphates other than ATP. The ATP gamma phosphate is transferred to the NDP beta phosphate via a ping-pong mechanism, using a phosphorylated active-site intermediate. In Stenotrophomonas maltophilia (strain R551-3), this protein is Nucleoside diphosphate kinase.